A 161-amino-acid polypeptide reads, in one-letter code: UPF0178 protein BruAb1_1955 (161 aa).

Belongs to the UPF0178 family.

The chain is UPF0178 protein BruAb1_1955 from Brucella abortus biovar 1 (strain 9-941).